The sequence spans 263 residues: Tryptophan synthase alpha chain (263 aa).

Catalysis depends on proton acceptor residues Glu-51 and Asp-62.

The protein belongs to the TrpA family. In terms of assembly, tetramer of two alpha and two beta chains.

The enzyme catalyses (1S,2R)-1-C-(indol-3-yl)glycerol 3-phosphate + L-serine = D-glyceraldehyde 3-phosphate + L-tryptophan + H2O. The protein operates within amino-acid biosynthesis; L-tryptophan biosynthesis; L-tryptophan from chorismate: step 5/5. The alpha subunit is responsible for the aldol cleavage of indoleglycerol phosphate to indole and glyceraldehyde 3-phosphate. This is Tryptophan synthase alpha chain from Methanosarcina barkeri (strain Fusaro / DSM 804).